A 325-amino-acid chain; its full sequence is Sulfite dehydrogenase subunit C (325 aa).

Transmembrane regions (helical) follow at residues 5–25 (FSVI…LAMV), 43–63 (FYAV…GASF), 87–107 (EVIV…AHWF), 126–146 (LLLG…TAMI), 165–185 (FLFL…AYIG), 186–206 (NPLV…GLAS), 266–286 (VYLV…YLIG), and 290–310 (LPII…WSFF).

The protein belongs to the DmsC family. Forms a heterotrimeric membrane-bound complex composed of a catalytic heterodimer (SoeAB) and a membrane anchor protein (SoeC).

Its subcellular location is the cell inner membrane. Functionally, part of the SoeABC complex that catalyzes the oxidation of sulfite to sulfate. SoeC probably anchors and stabilizes the catalytic subunits. This chain is Sulfite dehydrogenase subunit C, found in Allochromatium vinosum (strain ATCC 17899 / DSM 180 / NBRC 103801 / NCIMB 10441 / D) (Chromatium vinosum).